Reading from the N-terminus, the 119-residue chain is Large ribosomal subunit protein uL18 (119 aa).

It belongs to the universal ribosomal protein uL18 family. In terms of assembly, part of the 50S ribosomal subunit; part of the 5S rRNA/L5/L18/L25 subcomplex. Contacts the 5S and 23S rRNAs.

Its function is as follows. This is one of the proteins that bind and probably mediate the attachment of the 5S RNA into the large ribosomal subunit, where it forms part of the central protuberance. This is Large ribosomal subunit protein uL18 from Cupriavidus taiwanensis (strain DSM 17343 / BCRC 17206 / CCUG 44338 / CIP 107171 / LMG 19424 / R1) (Ralstonia taiwanensis (strain LMG 19424)).